The primary structure comprises 210 residues: Oxygen-insensitive NADPH nitroreductase (210 aa).

150–155 (GVSLMG) is an NADP(+) binding site.

Belongs to the nitroreductase family.

Reduction of a variety of nitroaromatic compounds using NADPH as source of reducing equivalents; two electrons are transferred. The sequence is that of Oxygen-insensitive NADPH nitroreductase (rdxA) from Helicobacter acinonychis (strain Sheeba).